We begin with the raw amino-acid sequence, 773 residues long: Phenylalanine--tRNA ligase beta subunit (773 aa).

The region spanning 39–150 is the tRNA-binding domain; it reads LKAPDKVVVG…GKLELGRPLN (112 aa). The region spanning 391 to 467 is the B5 domain; sequence KELPIIPISI…RIIGIDNIAS (77 aa). Mg(2+) contacts are provided by Asp-445, Asp-451, Glu-454, and Glu-455. In terms of domain architecture, FDX-ACB spans 682-773; it reads SKFPAITRDL…TLKNLGLDLR (92 aa).

It belongs to the phenylalanyl-tRNA synthetase beta subunit family. Type 1 subfamily. Tetramer of two alpha and two beta subunits. Requires Mg(2+) as cofactor.

Its subcellular location is the cytoplasm. It carries out the reaction tRNA(Phe) + L-phenylalanine + ATP = L-phenylalanyl-tRNA(Phe) + AMP + diphosphate + H(+). This Campylobacter jejuni (strain RM1221) protein is Phenylalanine--tRNA ligase beta subunit.